Reading from the N-terminus, the 293-residue chain is MNPIVGSIVALVTPMLEDGSVDYPTLRQLIDWHIAEGTACIGVVGTTGESPTVSVEEHCEIIRVAVEQTAGRVPVMAGAGGNSTREAIELARFAKKVGADCTLSVVPYYNKPSQEGIYQHFRAIAEAVDIPTVLYNVPGRTVADMLPETTLRLAQVPGVIGIKEATGNIERACWLIKQAPAGFSIYSGDDGTAVALMLLGGHGNVSVTANVAPRAMADLCRAAVAGDARTAREIHFKLLGLHKLLFAEPNPTPVKWAMHRLGLCAATMRLPMVPMSAHLEAGLEAAMREAGLL.

Pyruvate is bound at residue Thr-47. Tyr-135 serves as the catalytic Proton donor/acceptor. Lys-163 serves as the catalytic Schiff-base intermediate with substrate. Val-205 provides a ligand contact to pyruvate.

Belongs to the DapA family. As to quaternary structure, homotetramer; dimer of dimers.

The protein localises to the cytoplasm. The catalysed reaction is L-aspartate 4-semialdehyde + pyruvate = (2S,4S)-4-hydroxy-2,3,4,5-tetrahydrodipicolinate + H2O + H(+). It participates in amino-acid biosynthesis; L-lysine biosynthesis via DAP pathway; (S)-tetrahydrodipicolinate from L-aspartate: step 3/4. In terms of biological role, catalyzes the condensation of (S)-aspartate-beta-semialdehyde [(S)-ASA] and pyruvate to 4-hydroxy-tetrahydrodipicolinate (HTPA). This chain is 4-hydroxy-tetrahydrodipicolinate synthase, found in Leptothrix cholodnii (strain ATCC 51168 / LMG 8142 / SP-6) (Leptothrix discophora (strain SP-6)).